The following is a 123-amino-acid chain: Ig heavy chain V region HPCG14 (123 aa).

One can recognise an Ig-like domain in the interval 1 to 114; that stretch reads EVKLVESGGG…GYDYWFDVWG (114 aa).

This Mus musculus (Mouse) protein is Ig heavy chain V region HPCG14.